The primary structure comprises 339 residues: Foldase protein PrsA (339 aa).

The N-terminal stretch at 1–26 (MKHLKNNTKKFTALLFALLFSMSIAG) is a signal peptide. A lipid anchor (N-palmitoyl cysteine) is attached at Cys-27. Cys-27 carries S-diacylglycerol cysteine lipidation. Positions 197–287 (KPTFHAQHVL…FGYHVIKLID (91 aa)) constitute a PpiC domain.

The protein belongs to the PrsA family.

It is found in the cell membrane. The catalysed reaction is [protein]-peptidylproline (omega=180) = [protein]-peptidylproline (omega=0). Plays a major role in protein secretion by helping the post-translocational extracellular folding of several secreted proteins. The sequence is that of Foldase protein PrsA from Clostridium tetani (strain Massachusetts / E88).